A 551-amino-acid chain; its full sequence is Probable 4-coumarate--CoA ligase 3 (551 aa).

ATP contacts are provided by Ser205, Ser206, Gly207, Thr208, Thr209, and Lys213. Phe253 provides a ligand contact to (E)-4-coumaroyl-AMP. Lys274 is a binding site for CoA. Residues 276–346 (EPVRFLELIK…RFKGRLVIKQ (71 aa)) are SBD1. 4 residues coordinate (E)-4-coumaroyl-AMP: Ala323, Gln346, Gly347, and Thr351. ATP is bound by residues Gln346, Gly347, Thr351, Asp430, and Arg445. The SBD2 stretch occupies residues 347–409 (GYGATELSPC…IKGPNVMLGY (63 aa)). (E)-4-coumaroyl-AMP is bound by residues Lys447 and Lys451. The CoA site is built by Lys453 and Gly454. Lys537 is an ATP binding site.

It belongs to the ATP-dependent AMP-binding enzyme family. Mg(2+) is required as a cofactor.

The enzyme catalyses (E)-4-coumarate + ATP + CoA = (E)-4-coumaroyl-CoA + AMP + diphosphate. It carries out the reaction (E)-4-coumarate + ATP + H(+) = (E)-4-coumaroyl-AMP + diphosphate. The catalysed reaction is (E)-4-coumaroyl-AMP + CoA = (E)-4-coumaroyl-CoA + AMP + H(+). The protein operates within phytoalexin biosynthesis; 3,4',5-trihydroxystilbene biosynthesis; 3,4',5-trihydroxystilbene from trans-4-coumarate: step 1/2. Its function is as follows. Carboxylate--CoA ligase that may use 4-coumarate as substrate. Follows a two-step reaction mechanism, wherein the carboxylate substrate first undergoes adenylation by ATP, followed by a thioesterification in the presence of CoA to yield the final CoA thioester. This is Probable 4-coumarate--CoA ligase 3 (4cl3) from Dictyostelium discoideum (Social amoeba).